Reading from the N-terminus, the 365-residue chain is PDZ and LIM domain protein 3 (365 aa).

The PDZ domain maps to 1 to 84; the sequence is MPQNVILPGP…QLCLKIDRAE (84 aa). Phosphoserine is present on serine 18. The interval 126–156 is disordered; the sequence is FIIPGRSSGCSTPSGIDGGSGRSTPSSVSTL. A compositionally biased stretch (polar residues) spans 147–156; sequence RSTPSSVSTL. One can recognise an LIM zinc-binding domain in the interval 293–352; that stretch reads PLCDKCGSGIVGAVVKARDKYRHPECFVCADCNLNLKQKGYFFVEGELYCETHARARMRP.

As to quaternary structure, interacts with ACTN2. Forms a heterodimer with PDLIM4 (via LIM domain).

It is found in the cytoplasm. It localises to the myofibril. The protein resides in the sarcomere. Its subcellular location is the z line. Its function is as follows. May play a role in the organization of actin filament arrays within muscle cells. This Sus scrofa (Pig) protein is PDZ and LIM domain protein 3 (PDLIM3).